The chain runs to 921 residues: Isoleucine--tRNA ligase (921 aa).

The short motif at 57-67 (PYANGELHMGH) is the 'HIGH' region element. An L-isoleucyl-5'-AMP-binding site is contributed by Glu552. The 'KMSKS' region motif lies at 593–597 (KMSKS). Lys596 is an ATP binding site. The Zn(2+) site is built by Cys888, Cys891, Cys908, and Cys911.

This sequence belongs to the class-I aminoacyl-tRNA synthetase family. IleS type 1 subfamily. In terms of assembly, monomer. It depends on Zn(2+) as a cofactor.

The protein localises to the cytoplasm. It carries out the reaction tRNA(Ile) + L-isoleucine + ATP = L-isoleucyl-tRNA(Ile) + AMP + diphosphate. Catalyzes the attachment of isoleucine to tRNA(Ile). As IleRS can inadvertently accommodate and process structurally similar amino acids such as valine, to avoid such errors it has two additional distinct tRNA(Ile)-dependent editing activities. One activity is designated as 'pretransfer' editing and involves the hydrolysis of activated Val-AMP. The other activity is designated 'posttransfer' editing and involves deacylation of mischarged Val-tRNA(Ile). The polypeptide is Isoleucine--tRNA ligase (Listeria monocytogenes serotype 4b (strain F2365)).